The primary structure comprises 312 residues: tRNA-cytidine(32) 2-sulfurtransferase (312 aa).

Residues 47 to 52 (SGGKDS) carry the PP-loop motif motif. [4Fe-4S] cluster-binding residues include Cys122, Cys125, and Cys213.

Belongs to the TtcA family. As to quaternary structure, homodimer. It depends on Mg(2+) as a cofactor. [4Fe-4S] cluster serves as cofactor.

Its subcellular location is the cytoplasm. The catalysed reaction is cytidine(32) in tRNA + S-sulfanyl-L-cysteinyl-[cysteine desulfurase] + AH2 + ATP = 2-thiocytidine(32) in tRNA + L-cysteinyl-[cysteine desulfurase] + A + AMP + diphosphate + H(+). It participates in tRNA modification. Functionally, catalyzes the ATP-dependent 2-thiolation of cytidine in position 32 of tRNA, to form 2-thiocytidine (s(2)C32). The sulfur atoms are provided by the cysteine/cysteine desulfurase (IscS) system. This is tRNA-cytidine(32) 2-sulfurtransferase from Actinobacillus succinogenes (strain ATCC 55618 / DSM 22257 / CCUG 43843 / 130Z).